We begin with the raw amino-acid sequence, 95 residues long: MRKLLAVFSKGRWKMEQKLQEQLDGLLEKYTELLLGETNDELKEEVKQWILYTHIAKSMPPLAKHWNATYPDAKQGIKEIIQHIKELNEAHRNKQ.

Residues 14 to 50 (KMEQKLQEQLDGLLEKYTELLLGETNDELKEEVKQWI) are a coiled coil.

This is an uncharacterized protein from Bacillus subtilis (strain 168).